The chain runs to 170 residues: MNTQWDSPSLGRWSLVLLLLGLVMPLAIVAQVLSYQEAVLRAIDGINQRSSDANLYRLLDLDPRPTMDGDPDTPKPVSFTVKETVCPRTIQRSPEECDFREDGLVKWCVGTVTLNQAKDSFDISCDKDKRKVAQLGDVLQKAGEKIVRGLKNIGQRIKDFFGKLTPRTES.

An N-terminal signal peptide occupies residues 1-30; it reads MNTQWDSPSLGRWSLVLLLLGLVMPLAIVA. The propeptide at 31–131 is cathelin-like domain (CLD); sequence QVLSYQEAVL…DISCDKDKRK (101 aa). Intrachain disulfides connect C86–C97 and C108–C125. Residues 150 to 162 form an active core region; the sequence is LKNIGQRIKDFFG.

The protein belongs to the cathelicidin family. In terms of assembly, monomer, homodimer or homotrimer (in vitro). Oligomerizes as tetra- or hexamer in solution (in vitro). Proteolytically cleaved by proteinase PRTN3 into antibacterial peptide LL-37. Proteolytically cleaved by cathepsin CTSG and neutrophil elastase ELANE. In terms of processing, resistant to proteolytic degradation in solution, and when bound to both zwitterionic (mimicking mammalian membranes) and negatively charged membranes (mimicking bacterial membranes). Post-translationally, after secretion onto the skin surface, the CAMP gene product is processed by a serine protease-dependent mechanism into multiple novel antimicrobial peptides distinct from and shorter than cathelicidin LL-37. These peptides show enhanced antimicrobial action, acquiring the ability to kill skin pathogens such as S.aureus, E.coli and C.albicans. These peptides have lost the ability to stimulate CXCL8/IL8 release from keratinocytes. The peptides act synergistically, killing bacteria at lower concentrations when present together, and maintain activity at increased salt condition.

It localises to the secreted. The protein localises to the vesicle. Antimicrobial protein that is an integral component of the innate immune system. Binds to bacterial lipopolysaccharides (LPS). Acts via neutrophil N-formyl peptide receptors to enhance the release of CXCL2. Postsecretory processing generates multiple cathelicidin antimicrobial peptides with various lengths which act as a topical antimicrobial defense in sweat on skin. The unprocessed precursor form, cathelicidin antimicrobial peptide, inhibits the growth of Gram-negative E.coli and E.aerogenes with efficiencies comparable to that of the mature peptide LL-37 (in vitro). Functionally, antimicrobial peptide that is an integral component of the innate immune system. Binds to bacterial lipopolysaccharides (LPS). Causes membrane permeabilization by forming transmembrane pores (in vitro). Causes lysis of E.coli. Exhibits antimicrobial activity against Gram-negative bacteria such as P.aeruginosa, S.typhimurium, E.aerogenes, E.coli and P.syringae, Gram-positive bacteria such as L.monocytogenes, S.epidermidis, S.pyogenes and S.aureus, as well as vancomycin-resistant enterococci (in vitro). Exhibits antimicrobial activity against methicillin-resistant S.aureus, P.mirabilis, and C.albicans in low-salt media, but not in media containing 100 mM NaCl (in vitro). Forms chiral supramolecular assemblies with quinolone signal (PQS) molecules of P.aeruginosa, which may lead to interference of bacterial quorum signaling and perturbance of bacterial biofilm formation. May form supramolecular fiber-like assemblies on bacterial membranes. Induces cytokine and chemokine producation as well as TNF/TNFA and CSF2/GMCSF production in normal human keratinocytes. Exhibits hemolytic activity against red blood cells. Its function is as follows. Exhibits antimicrobial activity against E.coli and B.megaterium (in vitro). The protein is Cathelicidin antimicrobial peptide of Ateles fusciceps (Brown-headed spider monkey).